A 222-amino-acid polypeptide reads, in one-letter code: Small ribosomal subunit protein eS8z (222 aa).

Disordered regions lie at residues 1–37 (MGIS…ANTK) and 125–147 (KKKS…VAAP). Positions 8-26 (IHKRRATGGKQKQWRKKRK) are enriched in basic residues.

This sequence belongs to the eukaryotic ribosomal protein eS8 family.

This Arabidopsis thaliana (Mouse-ear cress) protein is Small ribosomal subunit protein eS8z (RPS8A).